The following is a 386-amino-acid chain: Circumsporozoite protein (386 aa).

Residues 1–22 (MKNFILLAVSSILLVDLFPTHC) form the signal peptide. Residues 51-304 (HVGQSASRGR…NEGANAPNEK (254 aa)) form a disordered region. The span at 72 to 100 (DAKKKKDGKKAEPKNPRENKLKQPGDRAD) shows a compositional bias: basic and acidic residues. A required for the binding to heparan sulfate proteoglycans (HSPGs) on the surface of host hepatocytes region spans residues 80–88 (KKAEPKNPR). Residues 91 to 95 (KLKQP) are region I; contains the proteolytic cleavage site. 20 consecutive repeat copies span residues 96 to 104 (GDRADGQPA), 105 to 113 (GDRADGQPA), 114 to 122 (GDRADGQPA), 123 to 131 (GDRADGQPA), 132 to 140 (GDRADGQPA), 141 to 149 (GDRAAGQPA), 150 to 158 (GDRADGQPA), 159 to 167 (GDRADGQPA), 168 to 176 (GDRAAGQPA), 177 to 185 (GDRAAGQPA), 186 to 194 (GDRADGQPA), 195 to 203 (GDRADGQPA), 204 to 212 (GDRADGQPA), 213 to 221 (GDRAAGQPA), 222 to 230 (GDRAAGQPA), 231 to 239 (GDRAAGQPA), 240 to 248 (GDRAAGQPA), 249 to 257 (GDRAAGQPA), 258 to 266 (GDRAAGQPA), and 267 to 275 (GDRAAGQPA). The 20 X 9 AA tandem repeats of G-D-R-A-[AD]-G-Q-P-A stretch occupies residues 96–275 (GDRADGQPAG…AGDRAAGQPA (180 aa)). The segment covering 275–292 (AGNGAGGQAAGGNAGGQG) has biased composition (gly residues). A compositionally biased stretch (low complexity) spans 293–303 (QNNEGANAPNE). A TSP type-1 domain is found at 312 to 364 (KVRATVGTEWTPCSVTCGVGVRVRRRVNAANKKPEDLTLNDLETDVCTMDKCA). 2 disulfide bridges follow: Cys-324–Cys-358 and Cys-328–Cys-363. Thr-327 is a glycosylation site (O-linked (Fuc) threonine). Cys-363 carries the GPI-anchor amidated cysteine lipid modification. Residues 364–386 (AGIFNVVSNSLGLVILLVLALFN) constitute a propeptide, removed in mature form.

This sequence belongs to the plasmodium circumsporozoite protein family. In terms of processing, during host cell invasion, proteolytically cleaved at the cell membrane in the region I by a papain-like cysteine protease of parasite origin. Cleavage is triggered by the sporozoite contact with highly sulfated heparan sulfate proteoglycans (HSPGs) present on the host hepatocyte cell surface. Cleavage exposes the TSP type-1 (TSR) domain and is required for productive invasion of host hepatocytes but not for adhesion to the host cell membrane. Cleavage is dispensable for sporozoite development in the oocyst, motility and for traversal of host and vector cells. Post-translationally, O-glycosylated; maybe by POFUT2.

The protein resides in the cell membrane. It localises to the cytoplasm. In terms of biological role, essential sporozoite protein. In the mosquito vector, required for sporozoite development in the oocyst, migration through the vector hemolymph and entry into the vector salivary glands. In the vertebrate host, required for sporozoite migration through the host dermis and infection of host hepatocytes. Binds to highly sulfated heparan sulfate proteoglycans (HSPGs) on the surface of host hepatocytes. Its function is as follows. In the vertebrate host, binds to highly sulfated heparan sulfate proteoglycans (HSPGs) on the surface of host hepatocytes and is required for sporozoite invasion of the host hepatocytes. The protein is Circumsporozoite protein of Plasmodium simium.